Here is a 293-residue protein sequence, read N- to C-terminus: Shikimate dehydrogenase (NADP(+)) (293 aa).

Shikimate is bound by residues 20-22 (SLT) and Thr-72. Lys-76 serves as the catalytic Proton acceptor. Residues Asn-97 and Asp-112 each coordinate shikimate. NADP(+) contacts are provided by residues 136–140 (GAGGA) and Ile-230. Tyr-232 provides a ligand contact to shikimate. Gly-253 contacts NADP(+).

Belongs to the shikimate dehydrogenase family. Homodimer.

The catalysed reaction is shikimate + NADP(+) = 3-dehydroshikimate + NADPH + H(+). It functions in the pathway metabolic intermediate biosynthesis; chorismate biosynthesis; chorismate from D-erythrose 4-phosphate and phosphoenolpyruvate: step 4/7. Involved in the biosynthesis of the chorismate, which leads to the biosynthesis of aromatic amino acids. Catalyzes the reversible NADPH linked reduction of 3-dehydroshikimate (DHSA) to yield shikimate (SA). This Pseudarthrobacter chlorophenolicus (strain ATCC 700700 / DSM 12829 / CIP 107037 / JCM 12360 / KCTC 9906 / NCIMB 13794 / A6) (Arthrobacter chlorophenolicus) protein is Shikimate dehydrogenase (NADP(+)).